Consider the following 37-residue polypeptide: MKVRASVKKLCRNCKVVKREGVVRVICTDPKHKQRQG.

It belongs to the bacterial ribosomal protein bL36 family.

The polypeptide is Large ribosomal subunit protein bL36A (Haemophilus ducreyi (strain 35000HP / ATCC 700724)).